The chain runs to 232 residues: tRNA-uridine aminocarboxypropyltransferase (232 aa).

Zn(2+)-binding residues include C31, C34, C41, and C43. Residues 137 to 140 (DGTW) carry the DXTW motif.

This sequence belongs to the TDD superfamily. DTWD2 family. TapT subfamily. As to quaternary structure, monomer in solution.

The catalysed reaction is a uridine in tRNA + S-adenosyl-L-methionine = a 3-[(3S)-3-amino-3-carboxypropyl]uridine in tRNA + S-methyl-5'-thioadenosine + H(+). The enzyme catalyses uridine(47) in tRNA(Phe) + S-adenosyl-L-methionine = 3-[(3S)-3-amino-3-carboxypropyl]uridine(47) in tRNA(Phe) + S-methyl-5'-thioadenosine + H(+). With respect to regulation, the degree of the acp3U modification at U47 is dependent on the presence of the m7G modification at the preceding nucleotide G46. It also depends on medium conditions. Its function is as follows. Catalyzes the formation of 3-(3-amino-3-carboxypropyl)uridine (acp3U) at position 47 of tRNAs. Acp3U47 confers thermal stability on tRNA. This chain is tRNA-uridine aminocarboxypropyltransferase, found in Escherichia coli (strain K12).